The chain runs to 217 residues: Trichothecene biosynthesis transcription regulator TRI6 (217 aa).

The C2H2-type zinc-finger motif lies at 185–215 (VRCPWHDQEGQQCLRVFSRVDNMRDHYRRIH).

The protein resides in the nucleus. Transcriptional activator of part of the core trichothecene biosynthesis cluster. This chain is Trichothecene biosynthesis transcription regulator TRI6, found in Fusarium sporotrichioides.